Reading from the N-terminus, the 444-residue chain is UDP-N-acetylmuramate--L-alanine ligase (444 aa).

An ATP-binding site is contributed by 111–117; the sequence is GAHGKTS.

It belongs to the MurCDEF family.

It is found in the cytoplasm. The catalysed reaction is UDP-N-acetyl-alpha-D-muramate + L-alanine + ATP = UDP-N-acetyl-alpha-D-muramoyl-L-alanine + ADP + phosphate + H(+). Its pathway is cell wall biogenesis; peptidoglycan biosynthesis. Functionally, cell wall formation. This chain is UDP-N-acetylmuramate--L-alanine ligase, found in Leuconostoc citreum (strain KM20).